The following is a 133-amino-acid chain: MSMSDTLADMLTRIRNAQRSRLMYVNVPSSRRREAILDVLVKEGFIHSFLIHEVRNGIKEINIKLKYSPKGESNIKEINRVSTPGKRVYLSIKKLRPYYNNMGIYIISTSKGIMSDREARKLGVGGEVICKVF.

The protein belongs to the universal ribosomal protein uS8 family. Part of the 30S ribosomal subunit. Contacts proteins S5 and S12.

Its function is as follows. One of the primary rRNA binding proteins, it binds directly to 16S rRNA central domain where it helps coordinate assembly of the platform of the 30S subunit. The chain is Small ribosomal subunit protein uS8 from Orientia tsutsugamushi (strain Boryong) (Rickettsia tsutsugamushi).